A 399-amino-acid polypeptide reads, in one-letter code: Insertion element IS900 uncharacterized 42 kDa protein (399 aa).

It belongs to the transposase IS1111A/IS1328/IS1533 family.

This chain is Insertion element IS900 uncharacterized 42 kDa protein, found in Mycobacterium paratuberculosis.